The sequence spans 828 residues: Protein ELFN1 (828 aa).

A signal peptide spans 1–27; the sequence is MAGRGWGALWVCVAAATLLHAGGLARA. Residues 28 to 418 lie on the Extracellular side of the membrane; the sequence is DCWLIEGDKG…VPSPSTATHY (391 aa). N-linked (GlcNAc...) asparagine glycosylation occurs at Asn59. 5 LRR repeats span residues 61–82, 85–106, 109–130, 133–154, and 157–178; these read TIVD…SLSR, NLTY…AFSG, NLQV…MLRG, KLEY…SFWE, and NIVN…TFAG. Asn85, Asn90, and Asn122 each carry an N-linked (GlcNAc...) asparagine glycan. The 63-residue stretch at 190–252 folds into the LRRCT domain; it reads NPFYCSCELL…LSKLQSVCTE (63 aa). An N-linked (GlcNAc...) asparagine glycan is attached at Asn210. A disordered region spans residues 259–291; sequence VVGPPRPASGRSQPGRSPPPPPPPEPSDMPCAD. Pro residues predominate over residues 274-285; that stretch reads RSPPPPPPPEPS. Residues 312 to 399 enclose the Fibronectin type-III domain; that stretch reads QAEARPLIKV…HNHTCLTICL (88 aa). One copy of the LRR 6 repeat lies at 318 to 342; it reads LIKVKQLTQNSATITVQLPSPFHRM. Residue Asn376 is glycosylated (N-linked (GlcNAc...) asparagine). Residues 419 to 439 traverse the membrane as a helical segment; that stretch reads IMTILGCLFGMVLVLGAVYYC. Residues 440–828 lie on the Cytoplasmic side of the membrane; that stretch reads LRRRRRQEEK…WKGVSAQHKS (389 aa). Ser461 carries the post-translational modification Phosphoserine. 3 disordered regions span residues 517 to 552, 624 to 649, and 696 to 732; these read TPKA…QSSV, LQRH…VRSP, and KGRQ…GLGR. The segment covering 529-541 has biased composition (basic and acidic residues); it reads RTGDPPERRDCEL. The span at 632–649 shows a compositional bias: low complexity; the sequence is AAGPPRASTSSSGSVRSP. Ser645 is modified (phosphoserine). Basic and acidic residues predominate over residues 696–705; that stretch reads KGRQYGEHRH. The span at 713–727 shows a compositional bias: pro residues; it reads AEPPAPPGPPPPPPH.

As to quaternary structure, interacts with PPP1CA.

The protein resides in the membrane. It is found in the cell projection. The protein localises to the dendrite. In terms of biological role, postsynaptic protein that regulates circuit dynamics in the central nervous system by modulating the temporal dynamics of interneuron recruitment. Specifically present in excitatory synapses onto oriens-lacunosum molecular (OLM) interneurons and acts as a regulator of presynaptic release probability to direct the formation of highly facilitating pyramidal-OLM synapses. Inhibits phosphatase activity of protein phosphatase 1 (PP1) complexes. In Homo sapiens (Human), this protein is Protein ELFN1 (ELFN1).